A 131-amino-acid chain; its full sequence is Small ribosomal subunit protein uS8 (131 aa).

This sequence belongs to the universal ribosomal protein uS8 family. As to quaternary structure, part of the 30S ribosomal subunit. Contacts proteins S5 and S12.

One of the primary rRNA binding proteins, it binds directly to 16S rRNA central domain where it helps coordinate assembly of the platform of the 30S subunit. The sequence is that of Small ribosomal subunit protein uS8 from Laribacter hongkongensis (strain HLHK9).